An 861-amino-acid chain; its full sequence is ToMV resistant protein Tm-2 netted virescent (861 aa).

Residues 63–83 are a coiled coil; it reads VKNLLKDIQELAGDVEDLLDD. One can recognise an NB-ARC domain in the interval 162 to 388; it reads DDFNMLQAKL…LESMGHKVQD (227 aa). Position 185-192 (185-192) interacts with ATP; it reads GMPGLGKT. LRR repeat units follow at residues 225–248, 305–327, 388–411, 449–472, 510–536, 585–608, 609–631, 652–680, 689–710, 712–735, 736–758, 784–807, and 810–835; these read LDIA…NLRS, LHAL…IFNF, DGCA…CFLY, LAED…TYNG, VARL…KLEK, MTCL…IVKL, TRLE…VWES, ISSF…FFEP, LRKL…IFSP, LKAL…LSSY, PHIA…SFPP, LRKL…EANG, and FPQL…DVSM.

Belongs to the disease resistance NB-LRR family. In terms of assembly, (Microbial infection) Interacts with tobamoviruses mouvement protein at the plasma membrane; this interaction triggers defense responses leading to programmed cell death. As to quaternary structure, binds to HSP90 proteins; this interaction seems required for defense responses toward tobamoviruses.

The protein resides in the cell membrane. Functionally, inhibitor of viral mouvements which confers resistance to some tobamoviruses including tomato mosaic virus (ToMV) (e.g. isolate L and W3) and tobacco mosaic virus (TMV), but not to resistance-breaking isolates (e.g. Ltbl) ToMV and tomato brown rugose fruit virus (ToBRFV). Elicits a hypersensitive reaction in response to avirulent (Avr) movement proteins from resistance inducing tobamoviruses (e.g. ToMV and TMV) strains, thus leading to programmed cell death. In Solanum lycopersicum (Tomato), this protein is ToMV resistant protein Tm-2 netted virescent.